Consider the following 282-residue polypeptide: MKLAVFTDSSAYLSAETLQREDLFVLDIPVNIDGEEYVEGINLSAEEFYQKMAQASELPKTSQPSIAKLDEILTSLKEQGYTHALGLFLSSGISGFYQSIQYMVDDYEGLTIAFPDTLITSAPLGIMVESVFNWRDQGDDFASIQDKLAIQISRTSAFIMVDDLDHLVKGGRLSNGAAILGNLLSIKPILYFNDQGVIEVYEKVRTEKKATKRLIEIIKETTASGQYRVIVIHGNAPEKAEELRQHLLDFGLGSDVSLATFGSVIGTHLGAGSIALGYIPVI.

A DegV domain is found at 3–280; sequence LAVFTDSSAY…AGSIALGYIP (278 aa). Threonine 61 and serine 94 together coordinate hexadecanoate.

Functionally, may bind long-chain fatty acids, such as palmitate, and may play a role in lipid transport or fatty acid metabolism. This is DegV domain-containing protein spr1415 from Streptococcus pneumoniae (strain ATCC BAA-255 / R6).